A 473-amino-acid polypeptide reads, in one-letter code: Photosystem II CP43 reaction center protein (473 aa).

Positions 1–14 (MKILYSLRRFYHVE) are excised as a propeptide. Thr-15 carries the post-translational modification N-acetylthreonine. Phosphothreonine is present on Thr-15. A run of 5 helical transmembrane segments spans residues 69–93 (LFEV…PHLA), 134–155 (LLGP…KDRN), 178–200 (KALY…RKIT), 255–275 (KPFA…LSYS), and 291–312 (WFNN…ASQA). Glu-367 is a binding site for [CaMn4O5] cluster. The helical transmembrane segment at 447 to 471 (RARAAAAGFEKGIDRDLEPVLYMTP) threads the bilayer.

The protein belongs to the PsbB/PsbC family. PsbC subfamily. In terms of assembly, PSII is composed of 1 copy each of membrane proteins PsbA, PsbB, PsbC, PsbD, PsbE, PsbF, PsbH, PsbI, PsbJ, PsbK, PsbL, PsbM, PsbT, PsbX, PsbY, PsbZ, Psb30/Ycf12, at least 3 peripheral proteins of the oxygen-evolving complex and a large number of cofactors. It forms dimeric complexes. Requires Binds multiple chlorophylls and provides some of the ligands for the Ca-4Mn-5O cluster of the oxygen-evolving complex. It may also provide a ligand for a Cl- that is required for oxygen evolution. PSII binds additional chlorophylls, carotenoids and specific lipids. as cofactor.

Its subcellular location is the plastid. It is found in the chloroplast thylakoid membrane. Functionally, one of the components of the core complex of photosystem II (PSII). It binds chlorophyll and helps catalyze the primary light-induced photochemical processes of PSII. PSII is a light-driven water:plastoquinone oxidoreductase, using light energy to abstract electrons from H(2)O, generating O(2) and a proton gradient subsequently used for ATP formation. This chain is Photosystem II CP43 reaction center protein, found in Sorghum bicolor (Sorghum).